Reading from the N-terminus, the 436-residue chain is Immediate-early phosphoprotein 57 (436 aa).

Residues 71 to 140 are disordered; it reads VPKRERSKTP…TPSNQNPLTE (70 aa). Positions 104-119 are enriched in low complexity; sequence QRPAPSARSRRPQPYS. Residues 127–138 are compositionally biased toward polar residues; it reads KPQSTPSNQNPL.

This sequence belongs to the herpesviridae UL69 family.

The protein localises to the host nucleus. It is found in the host cytoplasm. Its function is as follows. Acts at a post-transcriptional level to regulate viral gene expression. This Alcelaphine herpesvirus 1 (strain C500) (AlHV-1) protein is Immediate-early phosphoprotein 57 (57).